A 207-amino-acid polypeptide reads, in one-letter code: dTTP/UTP pyrophosphatase (207 aa).

D79 functions as the Proton acceptor in the catalytic mechanism.

Belongs to the Maf family. YhdE subfamily. The cofactor is a divalent metal cation.

The protein resides in the cytoplasm. It catalyses the reaction dTTP + H2O = dTMP + diphosphate + H(+). The enzyme catalyses UTP + H2O = UMP + diphosphate + H(+). Functionally, nucleoside triphosphate pyrophosphatase that hydrolyzes dTTP and UTP. May have a dual role in cell division arrest and in preventing the incorporation of modified nucleotides into cellular nucleic acids. This is dTTP/UTP pyrophosphatase from Rhodopseudomonas palustris (strain BisB5).